A 181-amino-acid chain; its full sequence is ADP-ribosylation factor 2-A (181 aa).

Gly-2 carries N-myristoyl glycine lipidation. Residues 24 to 31 (GLDAAGKT), 67 to 71 (DVGGQ), and 126 to 129 (NKQD) contribute to the GTP site.

Belongs to the small GTPase superfamily. Arf family.

The protein resides in the golgi apparatus. Its activity is regulated as follows. Activated by AGD10. Functionally, GTP-binding protein involved in protein trafficking; may modulate vesicle budding and uncoating within the Golgi apparatus. The sequence is that of ADP-ribosylation factor 2-A (ARF2-A) from Arabidopsis thaliana (Mouse-ear cress).